Reading from the N-terminus, the 403-residue chain is Transcription factor E2F1 (403 aa).

Positions 44–85 (ATPQPSRPGPAPRRPALGRPPVKRKLNLETDHQYIAESLPAA) are cyclin A/CDK2 binding. The tract at residues 45–64 (TPQPSRPGPAPRRPALGRPP) is disordered. Residues 87–171 (GRARIPGRGA…KNNIQWLGSQ (85 aa)) mediate DNA binding. Residues 130–151 (LNWAAEVLKVQKRRIYDITNVL) are leucine-zipper. A DEF box motif is present at residues 135 to 171 (EVLKVQKRRIYDITNVLEGIQLITKKSKNNIQWLGSQ). The interval 172-261 (VAAGASSRQR…VSDPGEAFQV (90 aa)) is dimerization. The interval 335–403 (PTEDVSLSPL…DFGDFTHLDF (69 aa)) is transactivation. The retinoblastoma protein RB1 binding stretch occupies residues 375 to 392 (QDYHFGLEEGEGISELFD).

The protein belongs to the E2F/DP family. As to quaternary structure, component of the DRTF1/E2F transcription factor complex. Forms heterodimers with DP family members. The E2F1 complex binds specifically hypophosphorylated RB1, the interaction represses E2F1-driven transcription. During the cell cycle, RB1 becomes phosphorylated in mid-to-late G1 phase, detaches from the DRTF1/E2F complex, rendering E2F transcriptionally active. Viral oncoproteins, notably E1A, T-antigen and HPV E7, are capable of sequestering RB1, thus releasing the active complex.

The protein localises to the nucleus. Transcription activator that binds DNA cooperatively with DP proteins through the E2 recognition site, 5'-TTTC[CG]CGC-3' found in the promoter region of a number of genes whose products are involved in cell cycle regulation or in DNA replication. The DRTF1/E2F complex functions in the control of cell-cycle progression from G1 to S phase. E2F1 binds preferentially RB1 in a cell-cycle dependent manner. It can mediate both cell proliferation and TP53/p53-dependent apoptosis. Blocks adipocyte differentiation by binding to specific promoters repressing CEBPA binding to its target gene promoters. Positively regulates transcription of RRP1B. The sequence is that of Transcription factor E2F1 from Gallus gallus (Chicken).